We begin with the raw amino-acid sequence, 97 residues long: Small ribosomal subunit protein bS6 (97 aa).

The protein belongs to the bacterial ribosomal protein bS6 family.

Functionally, binds together with bS18 to 16S ribosomal RNA. The chain is Small ribosomal subunit protein bS6 from Listeria monocytogenes serotype 4b (strain CLIP80459).